Here is a 62-residue protein sequence, read N- to C-terminus: Large ribosomal subunit protein bL28 (62 aa).

The disordered stretch occupies residues 1-28 (MARVCAITGRKARSGNSRSHAMNATKRK).

This sequence belongs to the bacterial ribosomal protein bL28 family.

The sequence is that of Large ribosomal subunit protein bL28 from Bacillus thuringiensis (strain Al Hakam).